A 217-amino-acid polypeptide reads, in one-letter code: Large ribosomal subunit protein bL25 (217 aa).

Residues 178–217 are disordered; that stretch reads VVAPTEEPTEEEIEAMEGEQQTEEPEVVGESKEDEEKTEE. Positions 184-205 are enriched in acidic residues; that stretch reads EPTEEEIEAMEGEQQTEEPEVV. Residues 206 to 217 show a composition bias toward basic and acidic residues; that stretch reads GESKEDEEKTEE.

The protein belongs to the bacterial ribosomal protein bL25 family. CTC subfamily. As to quaternary structure, part of the 50S ribosomal subunit; part of the 5S rRNA/L5/L18/L25 subcomplex. Contacts the 5S rRNA. Binds to the 5S rRNA independently of L5 and L18.

This is one of the proteins that binds to the 5S RNA in the ribosome where it forms part of the central protuberance. The sequence is that of Large ribosomal subunit protein bL25 from Staphylococcus aureus (strain MRSA252).